A 393-amino-acid chain; its full sequence is Elongation factor Tu (393 aa).

Positions 10 to 203 (KPHVNIGTIG…AVDEFIPEPL (194 aa)) constitute a tr-type G domain. The segment at 19–26 (GHVDHGKT) is G1. 19–26 (GHVDHGKT) is a GTP binding site. A Mg(2+)-binding site is contributed by threonine 26. The tract at residues 60–64 (GITIS) is G2. The interval 81–84 (DCPG) is G3. GTP-binding positions include 81-85 (DCPGH) and 136-139 (NKVD). Positions 136-139 (NKVD) are G4. Residues 173-175 (SAL) form a G5 region.

Belongs to the TRAFAC class translation factor GTPase superfamily. Classic translation factor GTPase family. EF-Tu/EF-1A subfamily. In terms of assembly, monomer.

The protein localises to the cytoplasm. The enzyme catalyses GTP + H2O = GDP + phosphate + H(+). Its function is as follows. GTP hydrolase that promotes the GTP-dependent binding of aminoacyl-tRNA to the A-site of ribosomes during protein biosynthesis. The chain is Elongation factor Tu from Chlorobium phaeobacteroides (strain DSM 266 / SMG 266 / 2430).